Here is a 371-residue protein sequence, read N- to C-terminus: Cytochrome b (371 aa).

Transmembrane regions (helical) follow at residues 25-45, 69-90, 105-125, and 170-190; these read FGSMLLTCLALQVLTGFFLAV, WMMQNLHAIGASMFFICIYIHI, WMSGITLLITLMATAFFGYVL, and FFALHFILPFAIISLSSLHVI. Residues His-75 and His-89 each coordinate heme b. Residues His-174 and His-188 each coordinate heme b. His-193 is an a ubiquinone binding site. 4 helical membrane-spanning segments follow: residues 218–238, 280–300, 312–332, and 339–358; these read HKDLLLLTLMMMFLFIIVSFF, LGGALALVMSIMILFCTPFTH, LSQLMFWTLVSTFITITWAAT, and FITISQVTSILYFTFFLSIP.

The protein belongs to the cytochrome b family. As to quaternary structure, the cytochrome bc1 complex contains 3 respiratory subunits (MT-CYB, CYC1 and UQCRFS1), 2 core proteins (UQCRC1 and UQCRC2) and probably 6 low-molecular weight proteins. Heme b serves as cofactor.

Its subcellular location is the mitochondrion inner membrane. In terms of biological role, component of the ubiquinol-cytochrome c reductase complex (complex III or cytochrome b-c1 complex) that is part of the mitochondrial respiratory chain. The b-c1 complex mediates electron transfer from ubiquinol to cytochrome c. Contributes to the generation of a proton gradient across the mitochondrial membrane that is then used for ATP synthesis. In Liasis mackloti savuensis (Savu python), this protein is Cytochrome b (MT-CYB).